The primary structure comprises 389 residues: NADH-quinone oxidoreductase subunit D (389 aa).

This sequence belongs to the complex I 49 kDa subunit family. In terms of assembly, NDH-1 is composed of 14 different subunits. Subunits NuoB, C, D, E, F, and G constitute the peripheral sector of the complex.

The protein resides in the cell inner membrane. The catalysed reaction is a quinone + NADH + 5 H(+)(in) = a quinol + NAD(+) + 4 H(+)(out). Functionally, NDH-1 shuttles electrons from NADH, via FMN and iron-sulfur (Fe-S) centers, to quinones in the respiratory chain. The immediate electron acceptor for the enzyme in this species is believed to be ubiquinone. Couples the redox reaction to proton translocation (for every two electrons transferred, four hydrogen ions are translocated across the cytoplasmic membrane), and thus conserves the redox energy in a proton gradient. This Rickettsia prowazekii (strain Madrid E) protein is NADH-quinone oxidoreductase subunit D.